A 420-amino-acid polypeptide reads, in one-letter code: UDP-N-acetylglucosamine 1-carboxyvinyltransferase 2 (420 aa).

Residue Lys22–Asn23 participates in phosphoenolpyruvate binding. Residue Arg92 coordinates UDP-N-acetyl-alpha-D-glucosamine. Cys116 acts as the Proton donor in catalysis. Cys116 is subject to 2-(S-cysteinyl)pyruvic acid O-phosphothioketal. UDP-N-acetyl-alpha-D-glucosamine is bound by residues Arg121–Leu125, Asp307, and Ile329.

Belongs to the EPSP synthase family. MurA subfamily.

It localises to the cytoplasm. The enzyme catalyses phosphoenolpyruvate + UDP-N-acetyl-alpha-D-glucosamine = UDP-N-acetyl-3-O-(1-carboxyvinyl)-alpha-D-glucosamine + phosphate. It functions in the pathway cell wall biogenesis; peptidoglycan biosynthesis. Its function is as follows. Cell wall formation. Adds enolpyruvyl to UDP-N-acetylglucosamine. The protein is UDP-N-acetylglucosamine 1-carboxyvinyltransferase 2 of Streptococcus thermophilus (strain CNRZ 1066).